The primary structure comprises 391 residues: Elongation factor Tu (391 aa).

One can recognise a tr-type G domain in the interval 10–201 (KPHVNIGTIG…AVDDYIPTPE (192 aa)). Positions 19 to 26 (GHVDHGKT) are G1. Residue 19-26 (GHVDHGKT) coordinates GTP. Threonine 26 lines the Mg(2+) pocket. Residues 55–59 (GITIS) are G2. The segment at 76–79 (DCPG) is G3. Residues 76-80 (DCPGH) and 131-134 (NKVD) each bind GTP. A G4 region spans residues 131-134 (NKVD). A G5 region spans residues 169 to 171 (SAL).

Belongs to the TRAFAC class translation factor GTPase superfamily. Classic translation factor GTPase family. EF-Tu/EF-1A subfamily. Monomer.

Its subcellular location is the cytoplasm. It carries out the reaction GTP + H2O = GDP + phosphate + H(+). GTP hydrolase that promotes the GTP-dependent binding of aminoacyl-tRNA to the A-site of ribosomes during protein biosynthesis. This Paracoccus denitrificans (strain Pd 1222) protein is Elongation factor Tu.